Reading from the N-terminus, the 380-residue chain is MLRRKPSNASDKEPTQKKKLSLQRSSSFKDFAKSKPSSPVVSEKEFNLDDNIPEDDSGVLTPEDSGKSGKKLGKKWRAVISRTMNRKMGKMMVKALSEEMGDTLEEGSASPTSPDCSLDSPGPEKMALAFTEQEEREPPSLSRQTSTGSELCSPGPGSGSFLEESPAPQYTGPFCGRARVHTDFTPSPYDHDSLKLQKGDVIQIVEKPPVGTWLGLLNGKLGSFKFIYVDVLPEEAVGPVRPSRRQSKGKRPKPKTLHELLERIGLEEHTSTLLLNGYQTLEDFKELRETHLNELNIMDPQHRAKLLTAAELLLDYDTGSEEAEEGAESSQEPVAHTVSEPKVDIPRDSGCFEGSESGRDEAELAGTEEQLQGLSLSGAP.

2 disordered regions span residues 1–76 (MLRR…GKKW) and 96–168 (LSEE…SPAP). Positions 22-41 (LQRSSSFKDFAKSKPSSPVV) are enriched in low complexity. Serine 27, serine 34, and serine 42 each carry phosphoserine. Phosphothreonine is present on threonine 61. Serine 97 bears the Phosphoserine mark. Threonine 103 carries the phosphothreonine modification. Serine 110 is subject to Phosphoserine. Threonine 112 bears the Phosphothreonine mark. Phosphoserine is present on residues serine 113 and serine 120. Residues 141–150 (LSRQTSTGSE) are compositionally biased toward polar residues. One can recognise an SH3 domain in the interval 173 to 234 (PFCGRARVHT…KFIYVDVLPE (62 aa)). The SAM domain occupies 252-316 (PKPKTLHELL…LTAAELLLDY (65 aa)). At threonine 318 the chain carries Phosphothreonine. Positions 318–327 (TGSEEAEEGA) are enriched in acidic residues. The segment at 318–380 (TGSEEAEEGA…LQGLSLSGAP (63 aa)) is disordered. A Phosphoserine modification is found at serine 320. The span at 369–380 (EQLQGLSLSGAP) shows a compositional bias: polar residues.

In terms of tissue distribution, preferentially expressed in lymphoid tissues. Expressed in bone marrow, thymus, spleen, lymph nodes and Peyer patches of gut. In the spleen and lymph nodes, expressed in both T- and B-cells. In the thymus, in the medulla and cortex.

Its function is as follows. May function as a signaling adapter protein in lymphocytes. This is SAM and SH3 domain-containing protein 3 (Sash3) from Mus musculus (Mouse).